Consider the following 481-residue polypeptide: Trigger factor (481 aa).

In terms of domain architecture, PPIase FKBP-type spans 174–261 (GDIAVVGFKG…LKDLKTRELP (88 aa)). Residues 430-481 (ENSTVTEKAPEAESDAAKASKPAAAKKDASKAKTAKTSKAKTAKAESESAES) form a disordered region. Residues 437–447 (KAPEAESDAAK) show a composition bias toward basic and acidic residues. The segment covering 462–471 (KTAKTSKAKT) has biased composition (basic residues). Over residues 472–481 (AKAESESAES) the composition is skewed to basic and acidic residues.

The protein belongs to the FKBP-type PPIase family. Tig subfamily.

The protein localises to the cytoplasm. It catalyses the reaction [protein]-peptidylproline (omega=180) = [protein]-peptidylproline (omega=0). Functionally, involved in protein export. Acts as a chaperone by maintaining the newly synthesized protein in an open conformation. Functions as a peptidyl-prolyl cis-trans isomerase. The polypeptide is Trigger factor (Synechococcus sp. (strain WH7803)).